Consider the following 357-residue polypeptide: Protein ATP1B4 (357 aa).

Residues 1-110 (MRRQLRSRRA…FLARTGQSWS (110 aa)) are Nuclear-facing. Residues 15-80 (YSYRYRLDDP…EEGQGQPTGN (66 aa)) are disordered. The span at 52 to 73 (EEEEEEEEKEEEEEEEKEEEEG) shows a compositional bias: acidic residues. A helical; Signal-anchor for type II membrane protein membrane pass occupies residues 111 to 131 (LILLIYFFFYASLAAVITLCM). At 132–357 (YTLFLTISPY…RVIFTLNIET (226 aa)) the chain is on the perinuclear space side.

This sequence belongs to the X(+)/potassium ATPases subunit beta family. As to quaternary structure, associates with a SMAD7-transcriptional complex. Interacts with SNW1 and TOR1AIP1. According to PubMed:17592128, does not associate with known Na,K-ATPase alpha-subunits. Highly expressed in skeletal muscle and at a lower level in heart.

It localises to the nucleus inner membrane. May act as a transcriptional coregulator during muscle development through its interaction with SNW1. Has lost its ancestral function as a Na,K-ATPase beta-subunit. This is Protein ATP1B4 (ATP1B4) from Homo sapiens (Human).